Here is a 449-residue protein sequence, read N- to C-terminus: tRNA-2-methylthio-N(6)-dimethylallyladenosine synthase (449 aa).

Residues 13-128 (RRIFIETYGC…LPHLIGTVEK (116 aa)) form the MTTase N-terminal domain. [4Fe-4S] cluster is bound by residues C22, C58, C92, C166, C170, and C173. Residues 152-383 (SRIKISGFIS…ITLQLKISLM (232 aa)) form the Radical SAM core domain. In terms of domain architecture, TRAM spans 386–449 (KENIGKTMEI…AATLFGDPKL (64 aa)).

The protein belongs to the methylthiotransferase family. MiaB subfamily. In terms of assembly, monomer. The cofactor is [4Fe-4S] cluster.

The protein resides in the cytoplasm. The enzyme catalyses N(6)-dimethylallyladenosine(37) in tRNA + (sulfur carrier)-SH + AH2 + 2 S-adenosyl-L-methionine = 2-methylsulfanyl-N(6)-dimethylallyladenosine(37) in tRNA + (sulfur carrier)-H + 5'-deoxyadenosine + L-methionine + A + S-adenosyl-L-homocysteine + 2 H(+). Catalyzes the methylthiolation of N6-(dimethylallyl)adenosine (i(6)A), leading to the formation of 2-methylthio-N6-(dimethylallyl)adenosine (ms(2)i(6)A) at position 37 in tRNAs that read codons beginning with uridine. This Azobacteroides pseudotrichonymphae genomovar. CFP2 protein is tRNA-2-methylthio-N(6)-dimethylallyladenosine synthase.